Here is a 257-residue protein sequence, read N- to C-terminus: Small ribosomal subunit protein uS2 (257 aa).

Belongs to the universal ribosomal protein uS2 family.

This chain is Small ribosomal subunit protein uS2, found in Bartonella henselae (strain ATCC 49882 / DSM 28221 / CCUG 30454 / Houston 1) (Rochalimaea henselae).